The primary structure comprises 704 residues: PHD finger protein MALE MEIOCYTE DEATH 1 (704 aa).

The PHD-type zinc-finger motif lies at 606 to 656 (MVKCICRARDDDGERMISCDVCEVWQHTRCCGIDDSDTLPPLFVCSNCCEE). 8 residues coordinate Zn(2+): Cys-609, Cys-611, Cys-624, Cys-627, His-632, Cys-635, Cys-650, and Cys-653.

In terms of assembly, interacts with JMJ16 in the nucleus of male meiocytes, especially on pachytene chromosomes. Expressed in inflorescence, specifically in male meiocytes.

It localises to the nucleus. Probable transcription factor required for chromosome organization and progression during male meiosis (e.g. microsporogenesis). Necessary for fertility and meiotic progressive compaction of prophase I chromosomes to metaphase I bivalents. Together with JMJ16, promotes gene expression in male meiocytes in an H3K9me3-dependent manner, and contributes to meiotic chromosome condensation by triggering some condensin promoters (e.g. CAP-D3 and CAP-H). This is PHD finger protein MALE MEIOCYTE DEATH 1 from Arabidopsis thaliana (Mouse-ear cress).